The chain runs to 117 residues: Large ribosomal subunit protein bL20 (117 aa).

The protein belongs to the bacterial ribosomal protein bL20 family.

Binds directly to 23S ribosomal RNA and is necessary for the in vitro assembly process of the 50S ribosomal subunit. It is not involved in the protein synthesizing functions of that subunit. This is Large ribosomal subunit protein bL20 from Pasteurella multocida (strain Pm70).